The following is a 403-amino-acid chain: Probable tRNA sulfurtransferase (403 aa).

A THUMP domain is found at 60-165; it reads QLAEERLKPI…KEGVFLSCRT (106 aa). ATP-binding positions include 183 to 184, 208 to 209, arginine 265, glycine 287, and glutamine 296; these read ML and HF.

It belongs to the ThiI family.

It is found in the cytoplasm. The catalysed reaction is [ThiI sulfur-carrier protein]-S-sulfanyl-L-cysteine + a uridine in tRNA + 2 reduced [2Fe-2S]-[ferredoxin] + ATP + H(+) = [ThiI sulfur-carrier protein]-L-cysteine + a 4-thiouridine in tRNA + 2 oxidized [2Fe-2S]-[ferredoxin] + AMP + diphosphate. It catalyses the reaction [ThiS sulfur-carrier protein]-C-terminal Gly-Gly-AMP + S-sulfanyl-L-cysteinyl-[cysteine desulfurase] + AH2 = [ThiS sulfur-carrier protein]-C-terminal-Gly-aminoethanethioate + L-cysteinyl-[cysteine desulfurase] + A + AMP + 2 H(+). The protein operates within cofactor biosynthesis; thiamine diphosphate biosynthesis. Catalyzes the ATP-dependent transfer of a sulfur to tRNA to produce 4-thiouridine in position 8 of tRNAs, which functions as a near-UV photosensor. Also catalyzes the transfer of sulfur to the sulfur carrier protein ThiS, forming ThiS-thiocarboxylate. This is a step in the synthesis of thiazole, in the thiamine biosynthesis pathway. The sulfur is donated as persulfide by IscS. This Listeria monocytogenes serotype 4a (strain HCC23) protein is Probable tRNA sulfurtransferase.